Reading from the N-terminus, the 700-residue chain is Lutropin-choriogonadotropic hormone receptor (700 aa).

A signal peptide spans 1–26 (MGRRVPALRQLLVLAMLVLKQSQLHS). Topologically, residues 27-362 (PELSGSRCPE…AFNPCEDIMG (336 aa)) are extracellular. The LRR 1 repeat unit spans residues 52 to 75 (RAGLARLSLTYLPVKVIPSQAFRG). A glycan (N-linked (GlcNAc...) asparagine) is linked at N103. LRR repeat units follow at residues 126 to 150 (LPRLKYLSICNTGIRTLPDVSKISS), 176 to 200 (MNNESITLKLYGNGFEEVQSHAFNG), and 225 to 248 (ATGPSILDVSSTKLQALPSHGLES). N-linked (GlcNAc...) asparagine glycans are attached at residues N178 and N199. 3 N-linked (GlcNAc...) asparagine glycosylation sites follow: N295, N303, and N317. Y335 carries the sulfotyrosine modification. Residues 363–390 (YAFLRVLIWLINILAIFGNLTVLFVLLT) form a helical membrane-spanning segment. The Cytoplasmic segment spans residues 391–399 (SRYKLTVPR). A helical membrane pass occupies residues 400 to 422 (FLMCNLSFADFCMGLYLLLIASV). Residues 423–443 (DSQTKGQYYNHAIDWQTGSGC) are Extracellular-facing. A disulfide bridge links C443 with C518. The helical transmembrane segment at 444–466 (SAAGFFTVFASELSVYTLTVITL) threads the bilayer. Residues 467–486 (ERWHTITYAVQLDQKLRLRH) lie on the Cytoplasmic side of the membrane. Residues 487–509 (AIPIMLGGWIFSTLMATLPLVGV) traverse the membrane as a helical segment. Residues 510–529 (SSYMKVSICLPMDVESTLSQ) lie on the Extracellular side of the membrane. A helical transmembrane segment spans residues 530-551 (VYILSILLLNAVAFVVICACYV). Residues 552–574 (RIYFAVQNPELTAPNKDTKIAKK) lie on the Cytoplasmic side of the membrane. Residues 575–598 (MAILIFTDFTCMAPISFFAISAAF) form a helical membrane-spanning segment. At 599-609 (KVPLITVTNSK) the chain is on the extracellular side. The chain crosses the membrane as a helical span at residues 610 to 631 (VLLVLFYPVNSCANPFLYAVFT). The Cytoplasmic segment spans residues 632–700 (KAFQRDFFLL…QPTPPRVLIQ (69 aa)). Residues C647 and C648 are each lipidated (S-palmitoyl cysteine).

This sequence belongs to the G-protein coupled receptor 1 family. FSH/LSH/TSH subfamily. Sulfated.

It localises to the cell membrane. Receptor for lutropin-choriogonadotropic hormone. The activity of this receptor is mediated by G proteins which activate adenylate cyclase. The polypeptide is Lutropin-choriogonadotropic hormone receptor (Lhcgr) (Mus musculus (Mouse)).